The chain runs to 926 residues: Transcriptional activator protein acu-15 (926 aa).

A DNA-binding region (zn(2)-C6 fungal-type) is located at residues 24 to 51 (CDRCRSKKIRCDGIRPCCSQCANVGFEC). Disordered regions lie at residues 100–129 (KMHS…TPAK), 602–649 (LPQS…SASL), and 667–801 (TPQH…TSTG). Residues 119-129 (EIKRDSGTPAK) show a composition bias toward basic and acidic residues. Composition is skewed to low complexity over residues 623–632 (AQQGSPSPSA) and 669–681 (QHQQ…LQQQ). Polar residues-rich tracts occupy residues 689-703 (ARSQ…QKAQ) and 726-736 (RTSTGTQSTPN). Over residues 740 to 792 (LSLSSPQSPVSPVQMRSQPHQLQQQQQQQPQPQQQQQQHQRSSIASSHSQQGQ) the composition is skewed to low complexity.

The protein resides in the nucleus. In terms of biological role, positive regulator of acetate induction. The chain is Transcriptional activator protein acu-15 (acu-15) from Neurospora crassa (strain ATCC 24698 / 74-OR23-1A / CBS 708.71 / DSM 1257 / FGSC 987).